Consider the following 1729-residue polypeptide: MTTLALNLAQYNDPITKGIIAQESLRRVRPDLKAVVNVNPYAIPTSAALVLEKLGIGTHPMSLAVHPHAPCKAIENQILNTVGHLLPKEQPVTFMAMKKSKLNMLRRHPSRADTFINPIYHPRDNVRYGLDPDPDQDASITASFLEVKTSTAFMQDTLHYLTPEDLLDIFETSPKLENLIASFVLPVEATRNMKSLYPDLYSIHYTHGGFQWAPSGHLGDAYFHEPWQLYWLRCGSLTRLIEEETTTTVQPPPGFEGEAYTRVRKEVRELKIYAERVTSIGAHHLFIFSRNAKATPRVRSYSQNGKWVTLPRIFRPVSHNVQTPLKQEVANSLMLYTYAVRPSLKDVAAKVRQKFDEKDLAEHSPLEITHLINYIYYIDQRAYLTNDDDILSDNLLKRWIFTPIQAAYKKAKGFLLGPDDFQKLLKALEWQPVTFDYAVDHYKSNPWRIHASRTGAKMRQLKNFLSRTTGLCEAVEDDALEGSELLKELEGNMWFRNPSEVEKEVFDAIVADLPPDSQRSELILEDPNSNARDYLPIQQDQPSVTQGPDEAAQTQTPTATSMVTNSVAARMPPPVPRTLREHHEQFPTTVRASFEQPSSTRAPETSENNTPAESVTPSPRAIYVGDFAIMDANASTSRASSPSPRRTVVSPRQPEAQNETLGRQIVSRVSPAHGCQMSPYAAQLAHQLSEQTAYTDVIGQRMVAFYSQHSRSYKYGRHEHRSQSWLPVIDSLQVALGLDESYDHCLIQRYRKHARVGLHADDEECYEPDSTIVTLNLYGNADFLIERNTDKASETITLQHNDMLFMPSGMQVTHRHAVCSLYEGRVSITFRNKTKDYLRKSAPDMNPVEQPGASAGQLTGPLDHRPEELPWEHWIPRLNRLGFTGLQKQTDPEGKLIYPITEIRQDMVYVPFPNCCPGPLRKDLEAMGRRPVRYTVDTGRALTLASDIKNNRVGALLQNADLTWKTLLVEYCRMEPTSVPMTVIHGAGGSGKSKLLQDHLNRAELNVVIIVPTRVLQQDWRNKMTEFPSFLVQTYEAAMMESAPQMVVFDDYGKLPHGYIDLFCQFHPSVEYVILTGDARQSTYYEYNSDAGIRNLPTNIEVFKQYCGYYINCTHRNKQDLANMLGVYSEKMGSTHFTFGNTCETGSLLLVPSGTQKTVMGEAGHKTETYAGCQGITADKVQIMIDHDTHKSADSHMYTALSRATEHIHFYNSIAGLNTARFHAKLNLTPYLKTFIQVITERAAAETEPAEYTVQAPTARTHIPVENCSTFLEKDLEEQRAKEDREVYTQAGATNVFQTNSPIVQCFQHQQPKDGALSIITHAKRLQYASAEANQAEYRAKLQIGAALWENFKTAMEIPDEPVPFIRDLWEQSEAEVLSTYLSKSEMAIKNGKNRQDPDWQDERMFVYLKAQWVTKASKFNLPTAKAGQTISAFKQAVVMKFGAMARYLRRITPKPDNIRINCEMQPQDISKWALGLDSHNRPTKQKWNFERPAFASDFEAFDQSQDGAMLHFEALWARHFNVPSSLIEEYLFLKMHAQAPKGYLTIMRLTGEGPTFDANTACSIAYNHTRYEIPKSCMQLYAGDDMLLDQVPVEKTGFKNIAAGLKLTAKTEIFEQKRGKWGEFCSWWMTPYGLVKDPITLYHRILLASEIGDLSKKIDAYAIEAEPAYALQGRLFDCFNEEQMTAHYGTIRRLIIEGKTNFSLDDQAPRHQDLQGILNCMDAKFMYH.

The Alphavirus-like MT domain occupies 59–232 (HPMSLAVHPH…FHEPWQLYWL (174 aa)). Disordered stretches follow at residues 528 to 619 (NSNA…TPSP) and 635 to 663 (STSR…TLGR). 2 stretches are compositionally biased toward polar residues: residues 538 to 567 (QQDQ…TNSV) and 586 to 617 (FPTT…SVTP). Residues 635-652 (STSRASSPSPRRTVVSPR) show a composition bias toward low complexity. One can recognise a Fe2OG dioxygenase domain in the interval 741 to 834 (SYDHCLIQRY…RVSITFRNKT (94 aa)). Residues histidine 759, aspartate 761, and histidine 816 each coordinate Fe cation. Arginine 825 is a 2-oxoglutarate binding site. The interval 841–862 (SAPDMNPVEQPGASAGQLTGPL) is disordered. The (+)RNA virus helicase ATP-binding domain occupies 957 to 1111 (LQNADLTWKT…VFKQYCGYYI (155 aa)). In terms of domain architecture, (+)RNA virus helicase C-terminal spans 1112–1247 (NCTHRNKQDL…VITERAAAET (136 aa)). A RdRp catalytic domain is found at 1492–1599 (RPAFASDFEA…DQVPVEKTGF (108 aa)).

It belongs to the potexvirus/carlavirus RNA replication protein family. Fe(2+) serves as cofactor.

The enzyme catalyses RNA(n) + a ribonucleoside 5'-triphosphate = RNA(n+1) + diphosphate. It catalyses the reaction ATP + H2O = ADP + phosphate + H(+). Functionally, RNA replication. The central part of this protein possibly functions as an ATP-binding helicase. The polypeptide is RNA-directed RNA polymerase (ORF1) (Lolium latent virus (isolate Lolium/USA/US1/-) (LoLV)).